Here is a 167-residue protein sequence, read N- to C-terminus: Transmembrane protein 229B (167 aa).

Residues 1–14 (MAAAEPLTAFSRWY) lie on the Cytoplasmic side of the membrane. A helical membrane pass occupies residues 15–35 (LYAIHGYFCEVMFTAAWEFVV). At 36-40 (NFNWK) the chain is on the extracellular side. The chain crosses the membrane as a helical span at residues 41 to 61 (FPGVTSVWALFIYGTSILIVE). Over 62 to 72 (KMYLYLKDKCH) the chain is Cytoplasmic. The helical transmembrane segment at 73–93 (ILVRCFIYTLWTYLWEFTTGL) threads the bilayer. The Extracellular portion of the chain corresponds to 94 to 109 (ILRQFNACPWDYSQFD). A helical membrane pass occupies residues 110–130 (FDFMGLITLEYAIPWFCASFI). The Cytoplasmic segment spans residues 131 to 167 (MEQLVIRNTLRLRFDETAEPGAPTVPVALANGHVKTD).

Belongs to the TMEM229 family.

Its subcellular location is the membrane. This chain is Transmembrane protein 229B (TMEM229B), found in Gallus gallus (Chicken).